The following is a 208-amino-acid chain: Probable hydrolase YcaC (208 aa).

Residue Cys-118 is part of the active site.

Homooctamer composed of two tetrameric rings.

In Escherichia coli (strain K12), this protein is Probable hydrolase YcaC (ycaC).